Consider the following 252-residue polypeptide: uncharacterized protein (252 aa).

Residues 1–25 (MRKKKFLSRFAFGSLFLLCGTILSA) form the signal peptide. Cys-26 carries the N-palmitoyl cysteine lipid modification. The S-diacylglycerol cysteine moiety is linked to residue Cys-26.

This sequence belongs to the MG439/MG440 family.

The protein resides in the cell membrane. This is an uncharacterized protein from Mycoplasma pneumoniae (strain ATCC 29342 / M129 / Subtype 1) (Mycoplasmoides pneumoniae).